We begin with the raw amino-acid sequence, 424 residues long: 3-isopropylmalate dehydratase large subunit 2 (424 aa).

3 residues coordinate [4Fe-4S] cluster: C299, C359, and C362.

Belongs to the aconitase/IPM isomerase family. LeuC type 2 subfamily. In terms of assembly, heterodimer of LeuC and LeuD. It depends on [4Fe-4S] cluster as a cofactor.

The catalysed reaction is (2R,3S)-3-isopropylmalate = (2S)-2-isopropylmalate. The protein operates within amino-acid biosynthesis; L-leucine biosynthesis; L-leucine from 3-methyl-2-oxobutanoate: step 2/4. Catalyzes the isomerization between 2-isopropylmalate and 3-isopropylmalate, via the formation of 2-isopropylmaleate. This is 3-isopropylmalate dehydratase large subunit 2 from Rubrobacter xylanophilus (strain DSM 9941 / JCM 11954 / NBRC 16129 / PRD-1).